We begin with the raw amino-acid sequence, 120 residues long: Myohemerythrin (120 aa).

Fe cation is bound by residues histidine 26, histidine 56, glutamate 60, histidine 75, histidine 79, histidine 108, and aspartate 113.

The protein belongs to the hemerythrin family.

In terms of biological role, myohemerythrin is an oxygen-binding protein found in the retractor muscles of certain worms. The oxygen-binding site contains two iron atoms. The protein is Myohemerythrin of Riftia pachyptila (Vent tube worm).